A 246-amino-acid polypeptide reads, in one-letter code: uncharacterized protein (246 aa).

A helical transmembrane segment spans residues 7–29 (GRGALASTGGCVVLAVAALMFVF).

The protein localises to the membrane. This is an uncharacterized protein from Treponema pallidum (strain Nichols).